Reading from the N-terminus, the 384-residue chain is MYLKTVQLRSFRNYREQQVNFESQKTIIVGNNAQGKSNLLEAVELLATLKSHRVSRDRDLVLEGATTGQILATLERAYGLAELGLILRVSGRRTVILNQEPLRRQLDFLGVLNAVQFSSLDLDLVRGSPESRRSWIDTLLVQLEPIYAHILSQYYQVLKQRNALLKKIRQQEEDSQNPSLSSEQLSNDISQLKLWDSQLAETGSRVTRRRARVLERLTPLAQKWHANISGKTEQLEIQYMPNVNWTEDEPMQVQQAFLEKIEKRRIAEQQLGTTVVGPHRDEIEFIINQTPAKYYGSQGQQRTLVLALKLAELHLIEEVVGEPPLLLLDDVLAELDPHRQNQLLDAIEDRFQTLITTTHLNSFETKWLKSSQILSIDGGQIRDF.

30-37 is a binding site for ATP; it reads GNNAQGKS.

The protein belongs to the RecF family.

Its subcellular location is the cytoplasm. Functionally, the RecF protein is involved in DNA metabolism; it is required for DNA replication and normal SOS inducibility. RecF binds preferentially to single-stranded, linear DNA. It also seems to bind ATP. This Gloeothece citriformis (strain PCC 7424) (Cyanothece sp. (strain PCC 7424)) protein is DNA replication and repair protein RecF.